We begin with the raw amino-acid sequence, 704 residues long: Ankyrin repeat and LEM domain-containing protein 1 homolog (704 aa).

Residues 1–29 (MPPNGAITTTPRSRMPPTTPSSGKSRPKK) form a disordered region. A compositionally biased stretch (low complexity) spans 8–22 (TTTPRSRMPPTTPSS). 2 ANK repeats span residues 28 to 59 (KKET…NVNA) and 63 to 93 (DGAT…PMSA). Disordered regions lie at residues 247 to 293 (NEDV…SQET), 314 to 358 (NAGL…ANTT), and 381 to 421 (SKSA…TTVD). The span at 276-288 (RKQRTPVNHHKRS) shows a compositional bias: basic residues. Low complexity-rich tracts occupy residues 329-346 (EPAI…TPKT) and 384-405 (AKSS…SFSS). Residues 425–470 (IRKIRRLREGELKSELKKFGISPAGPLDARTRRLYEKKLLIERRKI) form the LEM domain. Residues 525-635 (YNAFCYLIMD…AVKLKNLRNK (111 aa)) form the GIY-YIG domain.

In terms of processing, phosphorylated. Phosphorylated during telophase when localized at the midbody.

It localises to the cytoplasm. Its subcellular location is the nucleus. The protein resides in the chromosome. It is found in the midbody. The protein localises to the cytoskeleton. It localises to the spindle. With respect to regulation, inhibited by EDTA. In terms of biological role, endonuclease which, in association with baf-1, plays an essential role during embryogenesis in the DNA repair response following DNA damage probably by ensuring proper chromosome segregation. Also required during postembryonic cell divisions after DNA damage caused by ionizing radiation to ensure normal cell proliferation. Resolves chromatin bridges in late mitosis that result from incomplete DNA replication, defective chromosome condensation or unresolved recombination intermediates. Together with brc-1, contributes to genome integrity by resolving mitotic chromatin bridges that result from incomplete processing of DNA breaks. In parallel to the slx-1/mus-81 pathway, acts in processing early recombination intermediates in meiotic prophase I to prevent illegitimate recombination. Also involved in processing remaining, erroneous recombination intermediates that persist into the second meiotic division. This is Ankyrin repeat and LEM domain-containing protein 1 homolog from Caenorhabditis elegans.